Reading from the N-terminus, the 61-residue chain is Bacteriocin sakacin-P (61 aa).

Residues 1 to 18 constitute a propeptide that is removed on maturation; the sequence is MEKFIELSLKEVTAITGG. Cysteines 27 and 32 form a disulfide.

Belongs to the bacteriocin class IIA/YGNGV family.

Its subcellular location is the secreted. In terms of biological role, bactericidal activity; inhibits closely related Lactobacilli, Listeria monocytogenes and ivanovvi, Enterococcus faecalis, Carnobacterium sp and Brocothrix thermosphacta. The chain is Bacteriocin sakacin-P (sakP) from Latilactobacillus sakei (Lactobacillus sakei).